The following is a 132-amino-acid chain: Phosphomevalonate dehydratase small subunit (132 aa).

The active-site Proton acceptor is the S62.

It belongs to the AcnX type II small subunit family. As to quaternary structure, heterodimer composed of a large subunit (PMDh-L) and a small subunit (PMDh-S).

The enzyme catalyses (R)-5-phosphomevalonate = (2E)-3-methyl-5-phosphooxypent-2-enoate + H2O. It participates in isoprenoid biosynthesis; isopentenyl diphosphate biosynthesis via mevalonate pathway. In terms of biological role, component of a hydro-lyase that catalyzes the dehydration of mevalonate 5-phosphate (MVA5P) to form trans-anhydromevalonate 5-phosphate (tAHMP). Involved in the archaeal mevalonate (MVA) pathway, which provides fundamental precursors for isoprenoid biosynthesis, such as isopentenyl diphosphate (IPP) and dimethylallyl diphosphate (DMAPP). The polypeptide is Phosphomevalonate dehydratase small subunit (Methanocella arvoryzae (strain DSM 22066 / NBRC 105507 / MRE50)).